The primary structure comprises 258 residues: Small ribosomal subunit protein uS2 (258 aa).

Residues 226–258 are disordered; it reads QGVSNEEVAAEQNIDLDEKEKSEETEATEATEE.

This sequence belongs to the universal ribosomal protein uS2 family.

The sequence is that of Small ribosomal subunit protein uS2 from Staphylococcus aureus (strain COL).